An 890-amino-acid chain; its full sequence is Serine/threonine-protein kinase D3 (890 aa).

5 positions are modified to phosphoserine: S6, S27, S37, S41, and S44. A Phorbol-ester/DAG-type 1 zinc finger spans residues 154–204 (PHTLYVHSYKAPTFCDYCGEMLWGLVRQGLKCEGCGLNYHKRCAFKIPNNC). Phosphoserine occurs at positions 213 and 216. Residues 271–321 (PHTFAVHSYTRPTICQYCKRLLKGLFRQGMQCKDCKFNCHKRCASKVPRDC) form a Phorbol-ester/DAG-type 2 zinc finger. Positions 332–371 (SSLGTDTDIPMDIDNNDINSDSSRGLDDTEEPSPPEDKMF) are disordered. Phosphoserine occurs at positions 364, 391, and 395. One can recognise a PH domain in the interval 416–532 (TMVKEGWMVH…WEKAIRQALM (117 aa)). Position 426 is a phosphotyrosine (Y426). S442 is modified (phosphoserine). At Y457 the chain carries Phosphotyrosine. The residue at position 535 (T535) is a Phosphothreonine. A Phosphoserine modification is found at S539. One can recognise a Protein kinase domain in the interval 576 to 832 (IFADEVLGSG…VDKSLSHPWL (257 aa)). ATP-binding positions include 582–590 (LGSGQFGIV) and K605. Catalysis depends on D699, which acts as the Proton acceptor. S731 carries the post-translational modification Phosphoserine; by PKC. Position 735 is a phosphoserine; by autocatalysis (S735). Position 742 is a phosphotyrosine (Y742).

Belongs to the protein kinase superfamily. CAMK Ser/Thr protein kinase family. PKD subfamily. Mg(2+) is required as a cofactor. In terms of tissue distribution, ubiquitous.

The protein resides in the cytoplasm. Its subcellular location is the membrane. The enzyme catalyses L-seryl-[protein] + ATP = O-phospho-L-seryl-[protein] + ADP + H(+). The catalysed reaction is L-threonyl-[protein] + ATP = O-phospho-L-threonyl-[protein] + ADP + H(+). Activated by DAG and phorbol esters. Phorbol-ester/DAG-type domains 1 and 2 bind both DAG and phorbol ester with high affinity and mediate translocation to the cell membrane. Autophosphorylation of Ser-735 and phosphorylation of Ser-731 by PKC relieves auto-inhibition by the PH domain. In terms of biological role, converts transient diacylglycerol (DAG) signals into prolonged physiological effects, downstream of PKC. Involved in resistance to oxidative stress. In Homo sapiens (Human), this protein is Serine/threonine-protein kinase D3 (PRKD3).